The primary structure comprises 694 residues: 4-alpha-glucanotransferase (694 aa).

The protein belongs to the disproportionating enzyme family.

It localises to the cytoplasm. It catalyses the reaction Transfers a segment of a (1-&gt;4)-alpha-D-glucan to a new position in an acceptor, which may be glucose or a (1-&gt;4)-alpha-D-glucan.. The sequence is that of 4-alpha-glucanotransferase (malQ) from Escherichia coli (strain K12).